The chain runs to 432 residues: 3-phosphoshikimate 1-carboxyvinyltransferase (432 aa).

Residues K22, S23, and R27 each contribute to the 3-phosphoshikimate site. Position 22 (K22) interacts with phosphoenolpyruvate. 2 residues coordinate phosphoenolpyruvate: G96 and R127. 7 residues coordinate 3-phosphoshikimate: S173, S174, Q175, S201, D317, N340, and K344. Residue Q175 coordinates phosphoenolpyruvate. D317 acts as the Proton acceptor in catalysis. Positions 348, 392, and 417 each coordinate phosphoenolpyruvate.

Belongs to the EPSP synthase family. As to quaternary structure, monomer.

Its subcellular location is the cytoplasm. It catalyses the reaction 3-phosphoshikimate + phosphoenolpyruvate = 5-O-(1-carboxyvinyl)-3-phosphoshikimate + phosphate. It participates in metabolic intermediate biosynthesis; chorismate biosynthesis; chorismate from D-erythrose 4-phosphate and phosphoenolpyruvate: step 6/7. In terms of biological role, catalyzes the transfer of the enolpyruvyl moiety of phosphoenolpyruvate (PEP) to the 5-hydroxyl of shikimate-3-phosphate (S3P) to produce enolpyruvyl shikimate-3-phosphate and inorganic phosphate. The chain is 3-phosphoshikimate 1-carboxyvinyltransferase from Mannheimia haemolytica (Pasteurella haemolytica).